The sequence spans 1062 residues: Protein P1-P2 (1062 aa).

Positions 1–20 (MNRFTAYAALFFIFSLCSTA) are cleaved as a signal peptide. A run of 3 helical transmembrane segments spans residues 121 to 141 (AASV…WTLA), 144 to 164 (ITLF…LGCI), and 172 to 192 (ALSL…KIIW). The Peptidase S39 domain maps to 207 to 399 (VEGYKGFSVP…GITSPNYVFE (193 aa)). Active-site for protease activity residues include His-255, Asp-286, and Ser-354. The disordered stretch occupies residues 456–557 (TNAPAEKTAQ…AEAQTKQTRK (102 aa)). Polar residues predominate over residues 463-484 (TAQTNSAEKTAPSTSAEKTAPT). Positions 497–511 (QNKRQLRHPRRRYKR) are enriched in basic residues. Residues 541 to 553 (QGVSESPAEAQTK) are compositionally biased toward polar residues. Residues 859-974 (EHTRPTDCSG…APNSDLEEYK (116 aa)) form the RdRp catalytic domain.

Specific enzymatic cleavages in vivo yield mature proteins. The protease probably cleaves itself and releases the RdRp (Potential). Cleavages have been shown in the P1 protein, but since the N-terminus containing the serine protease is shared between P1 and P1-P2, cleavages should also occur within the P1-P2 protein.

The protein resides in the membrane. The catalysed reaction is RNA(n) + a ribonucleoside 5'-triphosphate = RNA(n+1) + diphosphate. In terms of biological role, precursor from which the RNA-dependent RNA polymerase (RdRp) is probably released. RNA-dependent RNA polymerase plays an essential role in virus replication (Potential). In Solanum tuberosum (Potato), this protein is Protein P1-P2.